Here is a 658-residue protein sequence, read N- to C-terminus: Translation factor GUF1, mitochondrial (658 aa).

Residues 1–40 (MRGCLQTVRWLTSAWQRPPSYPPLSRAAPCRFFNVSIPRN) constitute a mitochondrion transit peptide. A tr-type G domain is found at 60-240 (DRFRNFCIVA…TVVEQIPAPV (181 aa)). Residues 69–76 (AHVDHGKS), 133–137 (DTPGH), and 187–190 (NKVD) each bind GTP.

Belongs to the TRAFAC class translation factor GTPase superfamily. Classic translation factor GTPase family. LepA subfamily.

Its subcellular location is the mitochondrion inner membrane. The catalysed reaction is GTP + H2O = GDP + phosphate + H(+). In terms of biological role, promotes mitochondrial protein synthesis. May act as a fidelity factor of the translation reaction, by catalyzing a one-codon backward translocation of tRNAs on improperly translocated ribosomes. Binds to mitochondrial ribosomes in a GTP-dependent manner. The polypeptide is Translation factor GUF1, mitochondrial (Paracoccidioides brasiliensis (strain Pb03)).